The sequence spans 208 residues: Large ribosomal subunit protein uL3 (208 aa).

Gln-149 is modified (N5-methylglutamine).

The protein belongs to the universal ribosomal protein uL3 family. As to quaternary structure, part of the 50S ribosomal subunit. Forms a cluster with proteins L14 and L19. Methylated by PrmB.

Functionally, one of the primary rRNA binding proteins, it binds directly near the 3'-end of the 23S rRNA, where it nucleates assembly of the 50S subunit. The sequence is that of Large ribosomal subunit protein uL3 from Glaesserella parasuis serovar 5 (strain SH0165) (Haemophilus parasuis).